The sequence spans 46 residues: DNA-directed RNA polymerase subunit Rpo12 (46 aa).

Zn(2+) contacts are provided by Cys-9, Cys-24, and Cys-27.

The protein belongs to the archaeal Rpo12/eukaryotic RPC10 RNA polymerase subunit family. Part of the RNA polymerase complex. Interacts with Rpo3. Forms an Rpo3-Rpo10-Rpo11-Rpo12 complex upon coexpression. The cofactor is Zn(2+).

The protein resides in the cytoplasm. The catalysed reaction is RNA(n) + a ribonucleoside 5'-triphosphate = RNA(n+1) + diphosphate. Its function is as follows. DNA-dependent RNA polymerase (RNAP) catalyzes the transcription of DNA into RNA using the four ribonucleoside triphosphates as substrates. The chain is DNA-directed RNA polymerase subunit Rpo12 from Methanocaldococcus jannaschii (strain ATCC 43067 / DSM 2661 / JAL-1 / JCM 10045 / NBRC 100440) (Methanococcus jannaschii).